A 268-amino-acid chain; its full sequence is Norsolorinic acid ketoreductase nor1 (268 aa).

I32, D79, N108, Y182, K186, V213, and T215 together coordinate NADP(+). Y182 acts as the Proton donor in catalysis. Catalysis depends on K186, which acts as the Lowers pKa of active site Tyr.

This sequence belongs to the short-chain dehydrogenases/reductases (SDR) family.

The protein localises to the cytoplasm. Its subcellular location is the cytosol. The protein resides in the vacuole. It carries out the reaction (1'S)-averantin + NADP(+) = norsolorinic acid + NADPH + H(+). It participates in mycotoxin biosynthesis. Functionally, norsolorinic acid ketoreductase; part of the fragmented gene cluster that mediates the biosynthesis of dothistromin (DOTH), a polyketide toxin very similar in structure to the aflatoxin precursor, versicolorin B. The first step of the pathway is the conversion of acetate to norsolorinic acid (NOR) and requires the fatty acid synthase subunits hexA and hexB, as well as the polyketide synthase pksA. PksA combines a hexanoyl starter unit and 7 malonyl-CoA extender units to synthesize the precursor NOR. The hexanoyl starter unit is provided to the acyl-carrier protein (ACP) domain by the fungal fatty acid synthase hexA/hexB. The second step is the conversion of NOR to averantin (AVN) and requires the norsolorinic acid ketoreductase nor1, which catalyzes the dehydration of norsolorinic acid to form (1'S)-averantin. The cytochrome P450 monooxygenase avnA then catalyzes the hydroxylation of AVN to 5'hydroxyaverantin (HAVN). The next step is performed by adhA that transforms HAVN to averufin (AVF). Averufin might then be converted to hydroxyversicolorone by cypX and avfA. Hydroxyversicolorone is further converted versiconal hemiacetal acetate (VHA) by moxY. VHA is then the substrate for the versiconal hemiacetal acetate esterase est1 to yield versiconal (VAL). Versicolorin B synthase vbsA then converts VAL to versicolorin B (VERB) by closing the bisfuran ring. Then, the activity of the versicolorin B desaturase verB leads to versicolorin A (VERA). DotB, a predicted chloroperoxidase, may perform epoxidation of the A-ring of VERA. Alternatively, a cytochrome P450, such as cypX or avnA could catalyze this step. It is also possible that another, uncharacterized, cytochrome P450 enzyme is responsible for this step. Opening of the epoxide could potentially be achieved by the epoxide hydrolase epoA. However, epoA seems not to be required for DOTH biosynthesis, but other epoxide hydrolases may have the ability to complement this hydrolysis. Alternatively, opening of the epoxide ring could be achieved non-enzymatically. The next step is the deoxygenation of ring A to yield the 5,8-dihydroxyanthraquinone which is most likely catalyzed by the NADPH dehydrogenase encoded by ver1. The last stages of DOTH biosynthesis are proposed to involve hydroxylation of the bisfuran. OrdB and norB might have oxidative roles here. An alternative possibility is that cytochrome P450 monoogenases such as avnA and cypX might perform these steps in addition to previously proposed steps. In Dothistroma septosporum (strain NZE10 / CBS 128990) (Red band needle blight fungus), this protein is Norsolorinic acid ketoreductase nor1.